A 199-amino-acid chain; its full sequence is Recombination protein RecR (199 aa).

The C4-type zinc-finger motif lies at 57–72; the sequence is CQSCRTFTEETYCPIC. Residues 81 to 176 form the Toprim domain; sequence SVICVVETPA…AVSRIAHGVP (96 aa).

Belongs to the RecR family.

In terms of biological role, may play a role in DNA repair. It seems to be involved in an RecBC-independent recombinational process of DNA repair. It may act with RecF and RecO. This chain is Recombination protein RecR, found in Shewanella piezotolerans (strain WP3 / JCM 13877).